The primary structure comprises 238 residues: Glycerol uptake facilitator protein 4 (238 aa).

The next 2 membrane-spanning stretches (helical) occupy residues 2 to 22 (IHQLLAEFMGTALMIIFGVGV) and 39 to 59 (IFAITTWGFGITIALFIFGNV). An NPA 1 motif is present at residues 62–64 (NPA). The next 3 helical transmembrane spans lie at 80–100 (FIPYSVAEVLGGVVGAVIVWI), 135–155 (FFVEFFDTFIFISGILAISEV), and 158–178 (PGIVPIGVGLLVWAIGMGLGG). The short motif at 185 to 187 (NLA) is the NPA 2 element. The chain crosses the membrane as a helical span at residues 211-231 (YGIIVPGIAPFVGAACAALFM).

Belongs to the MIP/aquaporin (TC 1.A.8) family.

Its subcellular location is the cell membrane. Transporter that facilitates the transmembrane diffusion of water, dihydroxyacetone, glycerol, urea, H(2)O(2) and D/L-lactic acid. Is involved in the cellular racemization of lactate and lactate metabolism, but has likely a more general physiological role. The transported molecule is indeed lactic acid and not the lactate anion, in agreement with the assumption that, with very few exceptions, MIPs (major intrinsic proteins) only facilitate the transport of uncharged solutes. The chain is Glycerol uptake facilitator protein 4 from Lactiplantibacillus plantarum (strain ATCC BAA-793 / NCIMB 8826 / WCFS1) (Lactobacillus plantarum).